Here is a 591-residue protein sequence, read N- to C-terminus: Formate--tetrahydrofolate ligase (591 aa).

Residue 74–81 (TPLGEGKS) coordinates ATP.

The protein belongs to the formate--tetrahydrofolate ligase family.

It catalyses the reaction (6S)-5,6,7,8-tetrahydrofolate + formate + ATP = (6R)-10-formyltetrahydrofolate + ADP + phosphate. It participates in one-carbon metabolism; tetrahydrofolate interconversion. This is Formate--tetrahydrofolate ligase from Lawsonia intracellularis (strain PHE/MN1-00).